The following is a 190-amino-acid chain: Glutathione peroxidase 2 (190 aa).

U40 is an active-site residue. A non-standard amino acid (selenocysteine) is located at residue U40.

This sequence belongs to the glutathione peroxidase family. As to quaternary structure, homotetramer. In terms of tissue distribution, mucosal epithelium of the gastrointestinal tract.

It localises to the cytoplasm. The protein resides in the cytosol. It catalyses the reaction 2 glutathione + H2O2 = glutathione disulfide + 2 H2O. The catalysed reaction is a hydroperoxy polyunsaturated fatty acid + 2 glutathione = a hydroxy polyunsaturated fatty acid + glutathione disulfide + H2O. It carries out the reaction tert-butyl hydroperoxide + 2 glutathione = tert-butanol + glutathione disulfide + H2O. The enzyme catalyses cumene hydroperoxide + 2 glutathione = 2-phenylpropan-2-ol + glutathione disulfide + H2O. It catalyses the reaction (13S)-hydroperoxy-(9Z,11E)-octadecadienoate + 2 glutathione = (13S)-hydroxy-(9Z,11E)-octadecadienoate + glutathione disulfide + H2O. The catalysed reaction is (5S)-hydroperoxy-(6E,8Z,11Z,14Z)-eicosatetraenoate + 2 glutathione = (5S)-hydroxy-(6E,8Z,11Z,14Z)-eicosatetraenoate + glutathione disulfide + H2O. It carries out the reaction (12R)-hydroperoxy-(5Z,8Z,10E,14Z)-eicosatetraenoate + 2 glutathione = (12R)-hydroxy-(5Z,8Z,10E,14Z)-eicosatetraenoate + glutathione disulfide + H2O. The enzyme catalyses (15S)-hydroperoxy-(5Z,8Z,11Z,13E)-eicosatetraenoate + 2 glutathione = (15S)-hydroxy-(5Z,8Z,11Z,13E)-eicosatetraenoate + glutathione disulfide + H2O. Catalyzes the reduction of hydroperoxides in a glutathione-dependent manner thus regulating cellular redox homeostasis. Can reduce small soluble hydroperoxide such as H2O2. Can reduce cumene hydroperoxide and tert-butyl hydroperoxide, as well as several fatty acid-derived hydroperoxides. Cannot reduce phosphatidycholine hydroperoxide. The polypeptide is Glutathione peroxidase 2 (Gpx2) (Rattus norvegicus (Rat)).